The primary structure comprises 429 residues: Citrate synthase (429 aa).

Active-site residues include H306 and D364.

It belongs to the citrate synthase family.

The enzyme catalyses oxaloacetate + acetyl-CoA + H2O = citrate + CoA + H(+). Its pathway is carbohydrate metabolism; tricarboxylic acid cycle; isocitrate from oxaloacetate: step 1/2. The protein is Citrate synthase (gltA) of Rhizobium meliloti (strain 1021) (Ensifer meliloti).